We begin with the raw amino-acid sequence, 199 residues long: MSLKQQLESDFEGHKRWALRRQMGIPNNRRLWVCACMDERLPVDDALGIRGDRGDAHVFRNAGGLITDDAIRSAMLTCNFFGTEEIVIINHTECGMMSAQTDTIVKALKDKGIDLDNLQLDPDLPELTLKAGMFGKWVKMYQDVDETCARQVEYMRNHPLIPKHVTISGWIWEVETGHLRPPHFRIGEKVNTNKAMGAK.

3 residues coordinate Zn(2+): cysteine 36, histidine 91, and cysteine 94.

The protein belongs to the beta-class carbonic anhydrase family. In terms of assembly, exists as both octamers and hexadecamers in solution. The hexadecameric homooligomer may form a catenane, through interactions of two interlocked octameric rings. The cofactor is Zn(2+).

The enzyme catalyses carbon disulfide + 2 H2O = 2 hydrogen sulfide + CO2 + 2 H(+). Its pathway is sulfur metabolism; hydrogen sulfide biosynthesis. Catalyzes the conversion of carbon disulfide into hydrogen sulfide and carbon dioxide, with carbonyl sulfide as an intermediate. Likely plays a key role in sulfur metabolism that allows A.thiooxidans G8 to grow on carbon disulfide as the main carbon and energy source. Does not show carbonic anhydrase activity (hydration of CO(2) to carbonate). The polypeptide is Carbon disulfide hydrolase (Acidithiobacillus thiooxidans (Thiobacillus thiooxidans)).